Reading from the N-terminus, the 286-residue chain is Merozoite surface protein 2 (286 aa).

The signal sequence occupies residues 1 to 20; sequence MKVIKTLSIINFFIFVTFNI. N-linked (GlcNAc...) asparagine glycosylation is found at Asn-22 and Asn-36. The tract at residues 43–248 is disordered; sequence MTESKTPTPT…SQKECTDGNK (206 aa). The segment at 44-212 is polymorphic region; sequence TESKTPTPTG…EQTESPELQS (169 aa). The span at 54-68 shows a compositional bias: gly residues; it reads AGAGASGSAGSGDGA. Repeat unit 1 spans residues 59 to 68; sequence SGSAGSGDGA. Residues 59–106 form a 5 X 10 AA tandem repeats of S-G-S-A-[GS]-[GS]-[AD]-G-A region; that stretch reads SGSAGSGDGASGSASGSASGSASGSAGASGSASGSAGASGSASGSAGA. One copy of the 2; partial repeat lies at 69-76; it reads SGSASGSA. Residues 69-137 show a composition bias toward low complexity; that stretch reads SGSASGSASG…STSTSSENPN (69 aa). Tandem repeats lie at residues 77 to 86, 88 to 96, and 97 to 106. Polar residues-rich tracts occupy residues 153–179 and 186–214; these read KPNQANKETQNNSNVQQDSQTKSNVPP and KSPTAQPEQAENSAPTAEQTESPELQSAP. The N-linked (GlcNAc...) asparagine glycan is linked to Asn-163. The N-linked (GlcNAc...) asparagine glycan is linked to Asn-235. Positions 239 to 248 are enriched in basic and acidic residues; sequence SQKECTDGNK. Cys-243 and Cys-251 are joined by a disulfide. N-linked (GlcNAc...) asparagine glycosylation is found at Asn-259 and Asn-260. Asn-260 is lipidated: GPI-anchor amidated asparagine. Positions 261–286 are cleaved as a propeptide — removed in mature form; the sequence is SSNIASINKFVVLISATLVLSFAIFI.

The protein localises to the cell membrane. May play a role in the merozoite attachment to the erythrocyte. This Plasmodium falciparum (isolate 311) protein is Merozoite surface protein 2.